Here is a 206-residue protein sequence, read N- to C-terminus: Guanylate kinase (206 aa).

Residues 6–184 form the Guanylate kinase-like domain; the sequence is GTLYIISAPS…ALDDLKAIFR (179 aa). Position 13 to 20 (13 to 20) interacts with ATP; the sequence is APSGAGKS.

This sequence belongs to the guanylate kinase family.

It is found in the cytoplasm. The enzyme catalyses GMP + ATP = GDP + ADP. Its function is as follows. Essential for recycling GMP and indirectly, cGMP. This Pseudomonas fluorescens (strain Pf0-1) protein is Guanylate kinase.